The chain runs to 348 residues: Flagellar P-ring protein (348 aa).

The N-terminal stretch at 1–16 (MRIFLLCLALSLSVFA) is a signal peptide.

This sequence belongs to the FlgI family. As to quaternary structure, the basal body constitutes a major portion of the flagellar organelle and consists of four rings (L,P,S, and M) mounted on a central rod.

It is found in the periplasm. The protein localises to the bacterial flagellum basal body. Assembles around the rod to form the L-ring and probably protects the motor/basal body from shearing forces during rotation. In Campylobacter lari (strain RM2100 / D67 / ATCC BAA-1060), this protein is Flagellar P-ring protein.